Consider the following 227-residue polypeptide: UPF0758 protein Pcar_0065 (227 aa).

One can recognise an MPN domain in the interval 105–227; the sequence is RYTSPQAVFA…YVSLADRGVL (123 aa). Zn(2+) is bound by residues His176, His178, and Asp189. The JAMM motif motif lies at 176–189; that stretch reads HNHPSGDPSPSRED.

This sequence belongs to the UPF0758 family.

The sequence is that of UPF0758 protein Pcar_0065 from Syntrophotalea carbinolica (strain DSM 2380 / NBRC 103641 / GraBd1) (Pelobacter carbinolicus).